The sequence spans 2224 residues: Myomegalin (2224 aa).

4 coiled-coil regions span residues 41-97 (REDV…RQQE), 162-205 (DQYS…LLEE), 236-318 (VSES…REML), and 350-682 (CSQL…ALRQ). The disordered stretch occupies residues 206–236 (PASMEVQPVPKGLPTQQKPDLHETPTTQPPV). A compositionally biased stretch (polar residues) spans 219 to 236 (PTQQKPDLHETPTTQPPV). The interval 703 to 751 (GVTSIGPHHGEQTDQGSMQMPSRDDSTSLTAREEASIPRSTLGDSDTVA) is disordered. The residue at position 705 (T705) is a Phosphothreonine. Positions 724 to 738 (SRDDSTSLTAREEAS) are enriched in basic and acidic residues. 3 coiled-coil regions span residues 745–822 (GDSD…QLVD), 856–886 (NKRQQLLLMLEGLVDERSRLNEALQAERQLY), and 949–986 (AQEMLHLRAEIHQHLEEKRKAEVELKELKAQIEEAGFS). 3 disordered regions span residues 1098–1128 (TGLPSLGKHQHQEQENTTTARPGSRPQSLPL), 1141–1161 (NKSQAQDSGHQPEFSLPGSTK), and 1270–1298 (VSPPAKKPLENKPGKQEEFRAHGTPDDSS). The segment covering 1112 to 1124 (ENTTTARPGSRPQ) has biased composition (polar residues). Coiled-coil stretches lie at residues 1159–1187 (STKHLRSQLAQCRQRYQDLQEKLLISEAT), 1295–1331 (DDSSLLRKDIRDLKAQLQNANKVIQNLRSRVRSLSAT), and 1377–1401 (GLQAKKDLESLIQRVSQLEAQLPKT). A compositionally biased stretch (basic and acidic residues) spans 1276 to 1298 (KPLENKPGKQEEFRAHGTPDDSS). The region spanning 1497–1588 (KDHKSEKEEA…DEKKPSPSHS (92 aa)) is the Olduvai domain. Disordered stretches follow at residues 1576-1637 (THYD…SLSQ), 1736-1757 (SSGQWDMMRPQKGSVSGELSSG), 1805-1824 (LSSTARENGSTSHFYSQGLE), and 1962-2001 (KASLGPIAVGQSFPDKAEPANLHQGSAASPPVRDVGLNSP). A compositionally biased stretch (polar residues) spans 1599 to 1609 (ESSSSPISLPT). A compositionally biased stretch (low complexity) spans 1748–1757 (GSVSGELSSG). Positions 1769–1958 (GADLLEEHLG…RLQLEQQMDR (190 aa)) form a coiled coil. Residues 2148–2191 (KEGQLMEKELLDLRAQVSQQEQILQNTAARLKRANQRKKSMEQF) are a coiled coil.

As to quaternary structure, interacts with PDE4D. Isoform 2 interacts with MAPRE1 and MAPRE3. Isoform 2 forms a pericentrosomal complex with AKAP9, CDK5RAP2 and EB1/MAPRE1; within this complex, may mediate MAPRE1-binding to CDK5RAP2. Interaction with AKAP9 stabilizes both proteins. Isoform 2 interacts (via N-terminus) with CAMSAP2; this interaction is much stronger in the presence of AKAP9. In complex with AKAP9, Isoform 2 recruits CAMSAP2 to the Golgi apparatus. Isoform 2 interacts with unglycosylated LGALS3BP; this interaction may connect the pericentrosomal complex to the gamma-tubulin ring complex (gamma-TuRC) to promote microtubule assembly and acetylation.

It is found in the cytoplasm. Its subcellular location is the cytoskeleton. The protein localises to the microtubule organizing center. It localises to the centrosome. The protein resides in the golgi apparatus. Its function is as follows. Functions as an anchor sequestering components of the cAMP-dependent pathway to Golgi and/or centrosomes. Functionally, participates in microtubule dynamics, promoting microtubule assembly. Depending upon the cell context, may act at the level of the Golgi apparatus or that of the centrosome. In complex with AKAP9, recruits CAMSAP2 to the Golgi apparatus and tethers non-centrosomal minus-end microtubules to the Golgi, an important step for polarized cell movement. In complex with AKAP9, EB1/MAPRE1 and CDK5RAP2, contributes to microtubules nucleation and extension from the centrosome to the cell periphery, a crucial process for directed cell migration, mitotic spindle orientation and cell-cycle progression. This chain is Myomegalin (Pde4dip), found in Mus musculus (Mouse).